The chain runs to 390 residues: Putative 8-amino-7-oxononanoate synthase (390 aa).

Residue R19 participates in substrate binding. A pyridoxal 5'-phosphate-binding site is contributed by 105–106; that stretch reads GY. A substrate-binding site is contributed by H130. Residues S177, 202–205, and 234–237 contribute to the pyridoxal 5'-phosphate site; these read DEAH and TFSK. An N6-(pyridoxal phosphate)lysine modification is found at K237. T351 lines the substrate pocket.

This sequence belongs to the class-II pyridoxal-phosphate-dependent aminotransferase family. BioF subfamily. As to quaternary structure, homodimer. The cofactor is pyridoxal 5'-phosphate.

The catalysed reaction is 6-carboxyhexanoyl-[ACP] + L-alanine + H(+) = (8S)-8-amino-7-oxononanoate + holo-[ACP] + CO2. It participates in cofactor biosynthesis; biotin biosynthesis. Functionally, catalyzes the decarboxylative condensation of pimeloyl-[acyl-carrier protein] and L-alanine to produce 8-amino-7-oxononanoate (AON), [acyl-carrier protein], and carbon dioxide. The chain is Putative 8-amino-7-oxononanoate synthase (bioF) from Geobacillus kaustophilus (strain HTA426).